A 170-amino-acid polypeptide reads, in one-letter code: Lipoprotein signal peptidase (170 aa).

3 consecutive transmembrane segments (helical) span residues 9-29 (FNIFVFVISLIFFDQLSKYLV), 72-92 (IFFIAMPIFILIFVFSLALKE), and 95-117 (CITRISLLLIFSGGVGNIIDRLF). Residues Asp124 and Asp146 contribute to the active site. A helical membrane pass occupies residues 143–163 (NFADSYVVIGMILFLVYDFFI).

The protein belongs to the peptidase A8 family.

The protein localises to the cell inner membrane. It carries out the reaction Release of signal peptides from bacterial membrane prolipoproteins. Hydrolyzes -Xaa-Yaa-Zaa-|-(S,diacylglyceryl)Cys-, in which Xaa is hydrophobic (preferably Leu), and Yaa (Ala or Ser) and Zaa (Gly or Ala) have small, neutral side chains.. It participates in protein modification; lipoprotein biosynthesis (signal peptide cleavage). Its function is as follows. This protein specifically catalyzes the removal of signal peptides from prolipoproteins. The chain is Lipoprotein signal peptidase from Borrelia garinii subsp. bavariensis (strain ATCC BAA-2496 / DSM 23469 / PBi) (Borreliella bavariensis).